The following is a 2164-amino-acid chain: Hemagglutinin A (2164 aa).

Positions M1 to A25 are cleaved as a signal peptide. 3 peptidase C25-like regions span residues Q26 to P539, G540 to P991, and G992 to P1443. Disordered regions lie at residues W493 to S512 and S520 to G541. Over residues P496 to T508 the composition is skewed to low complexity.

The protein belongs to the peptidase C25 family.

Agglutinates erythrocytes. This Porphyromonas gingivalis (strain ATCC BAA-308 / W83) protein is Hemagglutinin A (hagA).